The primary structure comprises 328 residues: Galactinol synthase 10 (328 aa).

Lys106 is a catalytic residue. Asp122, Asp124, and His248 together coordinate Mn(2+).

The protein belongs to the glycosyltransferase 8 family. Galactosyltransferase subfamily. It depends on a divalent metal cation as a cofactor.

The protein localises to the cytoplasm. The catalysed reaction is myo-inositol + UDP-alpha-D-galactose = alpha-D-galactosyl-(1-&gt;3)-1D-myo-inositol + UDP + H(+). In terms of biological role, galactinol synthase involved in the biosynthesis of raffinose family oligosaccharides (RFOs) that function as osmoprotectants. May promote plant stress tolerance. The polypeptide is Galactinol synthase 10 (GOLS10) (Arabidopsis thaliana (Mouse-ear cress)).